The sequence spans 309 residues: Probable copper-dependent oxygenase clz3 (309 aa).

N9 and N249 each carry an N-linked (GlcNAc...) asparagine glycan. The chain crosses the membrane as a helical span at residues 257 to 277; sequence FAVPLAAIAFIALIISGGYVI.

This sequence belongs to the clz3 oxygenase family.

Its subcellular location is the membrane. The protein operates within secondary metabolite biosynthesis. Probable copper-dependent oxygenase; part of the gene cluster that mediates the biosynthesis of squalestatin S1 (SQS1, also known as zaragozic acid A), a heavily oxidized fungal polyketide that offers potent cholesterol lowering activity by targeting squalene synthase (SS). SQS1 is composed of a 2,8-dioxobicyclic[3.2.1]octane-3,4,5-tricarboxyclic acid core that is connected to two lipophilic polyketide arms. These initial steps feature the priming of an unusual benzoic acid starter unit onto the highly reducing polyketide synthase clz14, followed by oxaloacetate extension and product release to generate a tricarboxylic acid containing product. The phenylalanine ammonia lyase (PAL) clz10 and the acyl-CoA ligase clz12 are involved in transforming phenylalanine into benzoyl-CoA. The citrate synthase-like protein clz17 is involved in connecting the C-alpha-carbons of the hexaketide chain and oxaloacetate to afford the tricarboxylic acid unit. The potential hydrolytic enzymes, clz11 and clz13, are in close proximity to pks2 and may participate in product release. On the other side, the tetraketide arm is synthesized by a the squalestatin tetraketide synthase clz2 and enzymatically esterified to the core in the last biosynthetic step, by the acetyltransferase clz6. The biosynthesis of the tetraketide must involve 3 rounds of chain extension. After the first and second rounds methyl-transfer occurs, and in all rounds of extension the ketoreductase and dehydratase are active. The enoyl reductase and C-MeT of clz2 are not active in the final round of extension. The acetyltransferase clz6 appears to have a broad substrate selectivity for its acyl CoA substrate, allowing the in vitro synthesis of novel squalestatins. The biosynthesis of SQS1 requires several oxidative steps likely performed by oxidoreductases clz3, clz15 and clz16. Finally, in support of the identification of the cluster as being responsible for SQS1 production, the cluster contains a gene encoding a putative squalene synthase (SS) clz20, suggesting a likely mechanism for self-resistance. The polypeptide is Probable copper-dependent oxygenase clz3 (Cochliobolus lunatus (Filamentous fungus)).